We begin with the raw amino-acid sequence, 334 residues long: Protein-glutamate methylesterase FrzG (334 aa).

Positions 147-334 (PYPLVAIAAS…AALMQWVDVC (188 aa)) constitute a CheB-type methylesterase domain. Active-site residues include S156, H183, and D276.

The enzyme catalyses [protein]-L-glutamate 5-O-methyl ester + H2O = L-glutamyl-[protein] + methanol + H(+). Probable methylesterase. Required for the normal aggregation of M.xanthus cells during fruiting body formation. It is also a component of a sensory transduction pathway that controls the frequency at which cells reverse their gliding direction. It may remove the methyl group from the gamma-glutamyl methyl ester residues in FrzCD. This chain is Protein-glutamate methylesterase FrzG (frzG), found in Myxococcus xanthus.